The following is a 206-amino-acid chain: Ras-related protein Rab-18 (206 aa).

At methionine 1 the chain carries N-acetylmethionine. The GTP site is built by serine 17, glycine 20, lysine 21, serine 22, serine 23, aspartate 34, proline 35, threonine 40, glycine 66, lysine 123, and aspartate 125. Residue serine 22 coordinates Mg(2+). 2 consecutive short sequence motifs (switch) follow at residues 31-45 (DTFD…GVDF) and 63-80 (DTAG…YYRG). Position 40 (threonine 40) interacts with Mg(2+). Residue serine 144 is modified to Phosphoserine. Position 152 (alanine 152) interacts with GTP. Cysteine 199 is lipidated: S-palmitoyl cysteine. Position 203 is a cysteine methyl ester (cysteine 203). Cysteine 203 carries S-geranylgeranyl cysteine lipidation. The propeptide at 204 to 206 (SVL) is removed in mature form.

Belongs to the small GTPase superfamily. Rab family. As to quaternary structure, interacts (in GTP-bound form) with ZFYVE1. Interacts with ZW10 and this interaction is enhanced in the presence of ZFYVE1. Interacts with BSCL2. (Microbial infection) Interacts with Hepatitis C virus (HCV) non-structural protein 5A; this interaction may promote the association of NS5A and other viral replicase components with lipid droplets. Mg(2+) is required as a cofactor. Ubiquitous.

Its subcellular location is the endoplasmic reticulum membrane. The protein localises to the golgi apparatus. It localises to the cis-Golgi network membrane. The protein resides in the lipid droplet. It is found in the apical cell membrane. It catalyses the reaction GTP + H2O = GDP + phosphate + H(+). Its activity is regulated as follows. Regulated by guanine nucleotide exchange factor (GEF) RAB3GAP1-RAB3GAP2 complex at the cis-Golgi membrane which promotes the exchange of bound GDP for free GTP. Regulated by GTPase activating protein (GAP) TBC1D20 at the ER membrane which increases the GTP hydrolysis activity. Inhibited by GDP dissociation inhibitors (GDIs) which prevent Rab-GDP dissociation. The small GTPases Rab are key regulators of intracellular membrane trafficking, from the formation of transport vesicles to their fusion with membranes. Rabs cycle between an inactive GDP-bound form and an active GTP-bound form that is able to recruit to membranes different sets of downstream effectors directly responsible for vesicle formation, movement, tethering and fusion. RAB18 is required for the localization of ZFYVE1 to lipid droplets and for its function in mediating the formation of endoplasmic reticulum-lipid droplets (ER-LD) contacts. Also required for maintaining endoplasmic reticulum structure. Plays a role in apical endocytosis/recycling. Plays a key role in eye and brain development and neurodegeneration. This is Ras-related protein Rab-18 from Homo sapiens (Human).